A 350-amino-acid chain; its full sequence is Twinfilin-1 (350 aa).

At Ser-2 the chain carries N-acetylserine. Positions 2 to 139 constitute an ADF-H 1 domain; that stretch reads SHRTGIQASE…SLHGYKKYLL (138 aa). Residues Ser-143 and Ser-277 each carry the phosphoserine modification. The ADF-H 2 domain occupies 175–313; sequence LQGVAFPISR…TADFLYEEVH (139 aa). Tyr-309 is modified (phosphotyrosine). Residues 316–350 are disordered; that stretch reads QHAHKQSFAKPKGPAGKRGIRRLIRGPAETEATTD. A Phosphothreonine modification is found at Thr-349.

The protein belongs to the actin-binding proteins ADF family. Twinfilin subfamily. As to quaternary structure, interacts with G-actin; ADP-actin form and capping protein (CP). May also be able to interact with TWF2 and phosphoinositides, PI(4,5)P2. When bound to PI(4,5)P2, it is down-regulated. Interacts with ACTG1. In terms of processing, phosphorylated on serine and threonine residues.

The protein resides in the cytoplasm. Its subcellular location is the cytoskeleton. Actin-binding protein involved in motile and morphological processes. Inhibits actin polymerization, likely by sequestering G-actin. By capping the barbed ends of filaments, it also regulates motility. Seems to play an important role in clathrin-mediated endocytosis and distribution of endocytic organelles. The sequence is that of Twinfilin-1 (TWF1) from Pongo abelii (Sumatran orangutan).